A 494-amino-acid polypeptide reads, in one-letter code: Rho GTPase-activating protein 19 (494 aa).

Alanine 2 bears the N-acetylalanine mark. Phosphoserine occurs at positions 7 and 31. The Rho-GAP domain occupies 102-308 (MSLKRKEKGV…FMIKHSQKLF (207 aa)). Disordered regions lie at residues 349-368 (KSQKRNRVDSCPHQEETQHH) and 399-421 (QSLTQTPGREPSTSQVQKRARSR). Over residues 354–368 (NRVDSCPHQEETQHH) the composition is skewed to basic and acidic residues. Residues 399 to 415 (QSLTQTPGREPSTSQVQ) show a composition bias toward polar residues. A phosphoserine mark is found at serine 422, serine 438, and serine 470. Position 478 is a phosphothreonine (threonine 478).

As to expression, strong expression in fetal heart, brain, placenta, lung, liver, skeletal muscle, kidney and pancreas. Weak expression in adult pancreas, spleen, thymus, and ovary.

It localises to the nucleus. In terms of biological role, GTPase activator for the Rho-type GTPases by converting them to an inactive GDP-bound state. This Homo sapiens (Human) protein is Rho GTPase-activating protein 19 (ARHGAP19).